Here is a 160-residue protein sequence, read N- to C-terminus: Lipoprotein signal peptidase (160 aa).

3 helical membrane passes run 6–26, 58–78, and 95–115; these read VWSS…IKYL, LAWL…AFVL, and FALV…HGYV. Active-site residues include Asp-117 and Asp-135. The helical transmembrane segment at 127-147 threads the bilayer; the sequence is SFAVFNLADAFITIGAGLIIL.

This sequence belongs to the peptidase A8 family.

Its subcellular location is the cell inner membrane. It carries out the reaction Release of signal peptides from bacterial membrane prolipoproteins. Hydrolyzes -Xaa-Yaa-Zaa-|-(S,diacylglyceryl)Cys-, in which Xaa is hydrophobic (preferably Leu), and Yaa (Ala or Ser) and Zaa (Gly or Ala) have small, neutral side chains.. The protein operates within protein modification; lipoprotein biosynthesis (signal peptide cleavage). In terms of biological role, this protein specifically catalyzes the removal of signal peptides from prolipoproteins. The sequence is that of Lipoprotein signal peptidase from Brucella abortus (strain S19).